Consider the following 1229-residue polypeptide: Membrane-anchored lipid-binding protein SIP3 (1229 aa).

Residues 1 to 1066 (MSVHGRDPKK…AEKFSRINRM (1066 aa)) lie on the Cytoplasmic side of the membrane. Residues 309 to 423 (SPEKSGWLYM…WLIAFEATKK (115 aa)) enclose the PH domain. The 206-residue stretch at 771-976 (EYSITYNHEY…VLRYYLEKIG (206 aa)) folds into the VASt domain. A helical transmembrane segment spans residues 1067 to 1087 (MVVGLLASIMINILLSEKASV). The Lumenal segment spans residues 1088-1229 (PYWSIKRAEK…ELEKLRPPIT (142 aa)). Asn-1206 carries N-linked (GlcNAc...) asparagine glycosylation.

The protein belongs to the SIP3 family. As to quaternary structure, interacts with SNF1.

It is found in the endoplasmic reticulum membrane. Functionally, may be involved in sterol transfer between intracellular membranes. The protein is Membrane-anchored lipid-binding protein SIP3 of Saccharomyces cerevisiae (strain ATCC 204508 / S288c) (Baker's yeast).